We begin with the raw amino-acid sequence, 1753 residues long: Negative regulator of sporulation PMD1 (1753 aa).

Kelch repeat units lie at residues 143–198 and 206–253; these read NIYI…VLNE and KLII…KILV. Residue threonine 298 is modified to Phosphothreonine. Residues 651 to 664 are compositionally biased toward polar residues; the sequence is TTKFGNSSQSSNGS. Disordered stretches follow at residues 651 to 753 and 771 to 807; these read TTKF…TTCS and LGLS…CTLS. Residues 670-683 are compositionally biased toward low complexity; the sequence is SKNGNSKSNSNTSL. Composition is skewed to polar residues over residues 690–699, 740–753, 774–783, and 797–807; these read DFTSSTSSPK, TGTS…TTCS, SEQSGRSTRA, and NDGNDSNCTLS. Serine 838 bears the Phosphoserine mark. Disordered regions lie at residues 875 to 915, 938 to 957, and 962 to 988; these read IASP…LGSS, PLEP…SSLA, and FGRD…ARRI. A compositionally biased stretch (low complexity) spans 880–900; it reads QSRQTSFASTASTASVVSSTS. The segment covering 938–947 has biased composition (pro residues); the sequence is PLEPLPPVPK. Over residues 979 to 988 the composition is skewed to low complexity; it reads KSSSSDARRI. Residues serine 1289, serine 1307, and serine 1356 each carry the phosphoserine modification. Disordered regions lie at residues 1312–1467, 1604–1686, and 1706–1753; these read SPAT…DLDS, PIFA…NKRF, and SAVN…GKRR. Residues 1344 to 1379 are compositionally biased toward polar residues; the sequence is VSRQQNFPRRSSSFTETVPTEPTRYNYQNLDSSKSN. A compositionally biased stretch (basic and acidic residues) spans 1399–1430; sequence NFDKYKVETLQKRNSNDGKDLDRTNDPLKNRG. The segment covering 1653-1677 has biased composition (polar residues); the sequence is IKFSQAPSTQISPRTSVTDFTASQQ. Serine 1664 is modified (phosphoserine). Basic and acidic residues predominate over residues 1711-1723; it reads GRKESEGHCEDRS.

It is found in the cytoplasm. In terms of biological role, negatively regulates early sporulation-specific genes. Seems to exert its function by positively regulating the Ras/cAMP pathway. Required for growth under alkaline conditions. Acts synergetically with MDS3. In Saccharomyces cerevisiae (strain ATCC 204508 / S288c) (Baker's yeast), this protein is Negative regulator of sporulation PMD1 (PMD1).